The chain runs to 407 residues: Phosphonoacetate hydrolase (407 aa).

Zn(2+) is bound by residues D25, T64, D202, H206, D241, H242, and H368. 2 residues coordinate substrate: T64 and D202. H242 and H368 together coordinate substrate.

Belongs to the alkaline phosphatase family. PhnA subfamily. In terms of assembly, homodimer. Requires Zn(2+) as cofactor.

It carries out the reaction phosphonoacetate + H2O = acetate + phosphate + H(+). Its function is as follows. Specifically hydrolyzes phosphonoacetate. Does not have activity on other organophosphonates or acetates. The polypeptide is Phosphonoacetate hydrolase (Pseudomonas cedrina).